Consider the following 421-residue polypeptide: Calreticulin (421 aa).

An N-terminal signal peptide occupies residues 1 to 22 (MAFRVPNSSLLSLILLSLLAIA). An N-linked (GlcNAc...) asparagine glycan is attached at Asn-56. Cysteines 110 and 142 form a disulfide. Residues Tyr-114, Lys-116, Tyr-133, and Asp-140 each coordinate an alpha-D-glucoside. An N-linked (GlcNAc...) asparagine glycan is attached at Asn-156. Tandem repeats lie at residues 196 to 207 (KQTGSLYSDWDL), 215 to 226 (DPEAKKPEDWED), 232 to 243 (DPEDKKPEGYDD), 250 to 261 (DPDAKKPEDWDD), 265 to 275 (GEWTAPTIPNP), 279 to 289 (GEWKPKKIKNP), and 293 to 303 (GKWKAPLIDNP). A 4 X approximate repeats region spans residues 196–261 (KQTGSLYSDW…DAKKPEDWDD (66 aa)). The segment at 217 to 283 (EAKKPEDWED…NPEYKGEWKP (67 aa)) is disordered. Acidic residues predominate over residues 223-232 (DWEDQEYIPD). Basic and acidic residues predominate over residues 233–257 (PEDKKPEGYDDIPKEITDPDAKKPE). Residues 265-303 (GEWTAPTIPNPEYKGEWKPKKIKNPNFKGKWKAPLIDNP) are 3 X approximate repeats. An alpha-D-glucoside is bound at residue Glu-323. Positions 350-380 (EETWGKQKDAEKAAFEELEKKLQEEESKEDP) are enriched in basic and acidic residues. The disordered stretch occupies residues 350 to 421 (EETWGKQKDA…ETEAEKHDEL (72 aa)). Positions 381 to 399 (VDSDAEDDDNEAEDGEESD) are enriched in acidic residues. The Prevents secretion from ER signature appears at 418 to 421 (HDEL).

This sequence belongs to the calreticulin family.

Its subcellular location is the endoplasmic reticulum lumen. Functionally, molecular calcium-binding chaperone promoting folding, oligomeric assembly and quality control in the ER via the calreticulin/calnexin cycle. This lectin may interact transiently with almost all of the monoglucosylated glycoproteins that are synthesized in the ER. This Prunus armeniaca (Apricot) protein is Calreticulin.